A 497-amino-acid chain; its full sequence is Carboxylesterase (497 aa).

The Acyl-ester intermediate role is filled by serine 185. Catalysis depends on charge relay system residues glutamate 319 and histidine 415.

This sequence belongs to the type-B carboxylesterase/lipase family.

It is found in the secreted. It catalyses the reaction a carboxylic ester + H2O = an alcohol + a carboxylate + H(+). This chain is Carboxylesterase, found in Thermobifida fusca (strain YX).